A 474-amino-acid polypeptide reads, in one-letter code: ATP-dependent rRNA helicase RRP3 (474 aa).

Positions 1–10 (MPSMKRRKLS) are enriched in basic residues. The segment at 1–43 (MPSMKRRKLSHTPPQGEAEDGFSDSETSQASLQETPGNDEKIE) is disordered. The segment covering 24–36 (DSETSQASLQETP) has biased composition (polar residues). A Q motif motif is present at residues 48 to 76 (KSFKDLGIIDSLCEACDSLGYKAPTQIQA). The region spanning 79-250 (IPLALQGRDL…RASLSNPLRV (172 aa)) is the Helicase ATP-binding domain. An ATP-binding site is contributed by 92–99 (AETGSGKT). Positions 198 to 201 (DEAD) match the DEAD box motif. The Helicase C-terminal domain occupies 278 to 422 (YLIYLLNEFP…EYKVEKEEVM (145 aa)). The disordered stretch occupies residues 442–474 (LHENRGKKGATLRNRRIGKGAKRSRDEMDREEG). Over residues 448–463 (KKGATLRNRRIGKGAK) the composition is skewed to basic residues. The segment covering 464 to 474 (RSRDEMDREEG) has biased composition (basic and acidic residues).

This sequence belongs to the DEAD box helicase family. DDX47/RRP3 subfamily. Interacts with the SSU processome.

It localises to the nucleus. It catalyses the reaction ATP + H2O = ADP + phosphate + H(+). In terms of biological role, ATP-dependent rRNA helicase required for pre-ribosomal RNA processing. Involved in the maturation of the 35S-pre-rRNA and to its cleavage to mature 18S rRNA. The chain is ATP-dependent rRNA helicase RRP3 from Coccidioides immitis (strain RS) (Valley fever fungus).